We begin with the raw amino-acid sequence, 347 residues long: Tetraacyldisaccharide 4'-kinase (347 aa).

65–72 (FVGGTGKT) lines the ATP pocket.

This sequence belongs to the LpxK family.

The catalysed reaction is a lipid A disaccharide + ATP = a lipid IVA + ADP + H(+). It functions in the pathway glycolipid biosynthesis; lipid IV(A) biosynthesis; lipid IV(A) from (3R)-3-hydroxytetradecanoyl-[acyl-carrier-protein] and UDP-N-acetyl-alpha-D-glucosamine: step 6/6. Functionally, transfers the gamma-phosphate of ATP to the 4'-position of a tetraacyldisaccharide 1-phosphate intermediate (termed DS-1-P) to form tetraacyldisaccharide 1,4'-bis-phosphate (lipid IVA). The chain is Tetraacyldisaccharide 4'-kinase from Janthinobacterium sp. (strain Marseille) (Minibacterium massiliensis).